We begin with the raw amino-acid sequence, 179 residues long: Protein GrpE (179 aa).

A disordered region spans residues 1-20 (MSEETKEEIKNEKVDEEVTE).

It belongs to the GrpE family. Homodimer.

It is found in the cytoplasm. In terms of biological role, participates actively in the response to hyperosmotic and heat shock by preventing the aggregation of stress-denatured proteins, in association with DnaK and GrpE. It is the nucleotide exchange factor for DnaK and may function as a thermosensor. Unfolded proteins bind initially to DnaJ; upon interaction with the DnaJ-bound protein, DnaK hydrolyzes its bound ATP, resulting in the formation of a stable complex. GrpE releases ADP from DnaK; ATP binding to DnaK triggers the release of the substrate protein, thus completing the reaction cycle. Several rounds of ATP-dependent interactions between DnaJ, DnaK and GrpE are required for fully efficient folding. The protein is Protein GrpE of Lactococcus lactis subsp. cremoris (strain MG1363).